We begin with the raw amino-acid sequence, 324 residues long: Glyoxylate/hydroxypyruvate reductase B (324 aa).

Catalysis depends on residues Arg-237 and Glu-266. His-285 (proton donor) is an active-site residue.

The protein belongs to the D-isomer specific 2-hydroxyacid dehydrogenase family. GhrB subfamily. In terms of assembly, homodimer.

The protein localises to the cytoplasm. The catalysed reaction is glycolate + NADP(+) = glyoxylate + NADPH + H(+). The enzyme catalyses (R)-glycerate + NAD(+) = 3-hydroxypyruvate + NADH + H(+). It carries out the reaction (R)-glycerate + NADP(+) = 3-hydroxypyruvate + NADPH + H(+). In terms of biological role, catalyzes the NADPH-dependent reduction of glyoxylate and hydroxypyruvate into glycolate and glycerate, respectively. This chain is Glyoxylate/hydroxypyruvate reductase B, found in Escherichia coli (strain SMS-3-5 / SECEC).